The following is a 348-amino-acid chain: Rhodopsin (348 aa).

The residue at position 1 (Met-1) is an N-acetylmethionine. Residues 1–36 (MNGTEGPNFYVPFSNVTGVVRSPFEQPQYYLAEPWQ) are Extracellular-facing. 2 N-linked (GlcNAc...) asparagine glycosylation sites follow: Asn-2 and Asn-15. A helical membrane pass occupies residues 37–61 (FSMLAAYMFLLIVLGFPINFLTLYV). At 62–73 (TVQHKKLRTPLN) the chain is on the cytoplasmic side. A helical transmembrane segment spans residues 74 to 96 (YILLNLAVADLFMVFGGFTTTLY). Residues 97–110 (TSLHGYFVFGPTGC) are Extracellular-facing. A disulfide bridge connects residues Cys-110 and Cys-187. The chain crosses the membrane as a helical span at residues 111–133 (NLEGFFATLGGEIALWSLVVLAI). Positions 134–136 (ERY) match the 'Ionic lock' involved in activated form stabilization motif. At 134–152 (ERYVVVCKPMSNFRFGENH) the chain is on the cytoplasmic side. Residues 153-173 (AIMGVVFTWIMALACAAPPLV) traverse the membrane as a helical segment. At 174–202 (GWSRYIPEGMQCSCGIDYYTLKPEVNNES) the chain is on the extracellular side. A Zn(2+)-binding site is contributed by Glu-201. The chain crosses the membrane as a helical span at residues 203-224 (FVIYMFVVHFTIPMIVIFFCYG). Residues 225 to 252 (QLVFTVKEAAAQQQESATTQKAEKEVTR) lie on the Cytoplasmic side of the membrane. A helical transmembrane segment spans residues 253-274 (MVIIMVIFFLICWLPYASVAFY). Residues 275–286 (IFTHQGSNFGPI) lie on the Extracellular side of the membrane. Gln-279 contacts Zn(2+). The chain crosses the membrane as a helical span at residues 287-308 (FMTLPAFFAKSSSIYNPVIYIM). Lys-296 carries the N6-(retinylidene)lysine modification. The Cytoplasmic portion of the chain corresponds to 309–348 (LNKQFRNCMLTTLCCGKNPLGDDDASATASKTETSQVAPA). Residues Cys-322 and Cys-323 are each lipidated (S-palmitoyl cysteine). Residues 330 to 348 (DDDASATASKTETSQVAPA) form an interaction with SAG region. Ser-334 is modified (phosphoserine). Residue Thr-336 is modified to Phosphothreonine. Residue Ser-338 is modified to Phosphoserine. Phosphothreonine is present on residues Thr-340 and Thr-342. Residue Ser-343 is modified to Phosphoserine.

It belongs to the G-protein coupled receptor 1 family. Opsin subfamily. In terms of assembly, homodimer. May form a complex composed of RHO, GRK1 and RCVRN in a Ca(2+)-dependent manner; RCVRN prevents the interaction between GRK1 and RHO. Interacts with GRK1. Interacts (phosphorylated form) with SAG. Interacts with GNAT1. Interacts with GNAT3. SAG and G-proteins compete for a common binding site. Interacts with PRCD; the interaction promotes PRCD stability. Forms a complex with ASAP1 and ARF4. Forms a complex with ASAP1, RAB11A, Rabin8/RAB3IP, ARF4 and RAB11FIP3; the complex regulates Golgi-to-cilia rhodopsin/RHO transport in photoreceptors. Phosphorylated on some or all of the serine and threonine residues present in the C-terminal region. In terms of processing, contains one covalently linked retinal chromophore. Upon light absorption, the covalently bound 11-cis-retinal is converted to all-trans-retinal. After hydrolysis of the Schiff base and release of the covalently bound all-trans-retinal, active rhodopsin is regenerated by binding of a fresh molecule of 11-cis-retinal. As to expression, rod-shaped photoreceptor cells in the retina (at protein level).

Its subcellular location is the membrane. The protein resides in the cell projection. It is found in the cilium. The protein localises to the photoreceptor outer segment. Functionally, photoreceptor required for image-forming vision at low light intensity. Required for photoreceptor cell viability after birth. Light-induced isomerization of 11-cis to all-trans retinal triggers a conformational change that activates signaling via G-proteins. Subsequent receptor phosphorylation mediates displacement of the bound G-protein alpha subunit by the arrestin SAG and terminates signaling. This Mus musculus (Mouse) protein is Rhodopsin (Rho).